A 389-amino-acid chain; its full sequence is Major outer membrane porin (389 aa).

The N-terminal stretch at 1 to 23 (MKKLLKSALLSAAFAGSVGSLQA) is a signal peptide.

Belongs to the chlamydial porin (CP) (TC 1.B.2) family. Part of a disulfide cross-linked outer membrane complex (COMC) composed of the major outer membrane porin (MOMP), the small cysteine-rich protein (OmcA) and the large cysteine-rich periplasmic protein (OmcB).

It is found in the cell outer membrane. In elementary bodies (EBs, the infectious stage, which is able to survive outside the host cell) provides the structural integrity of the outer envelope through disulfide cross-links with the small cysteine-rich protein and the large cysteine-rich periplasmic protein. It has been described in publications as the Sarkosyl-insoluble COMC (Chlamydia outer membrane complex), and serves as the functional equivalent of peptidoglycan. In terms of biological role, permits diffusion of specific solutes through the outer membrane. This chain is Major outer membrane porin (ompA), found in Chlamydia pneumoniae (Chlamydophila pneumoniae).